A 148-amino-acid chain; its full sequence is SsrA-binding protein (148 aa).

The disordered stretch occupies residues 124 to 148; that stretch reads QFDKRETEKDRDWQREKARLMREKA.

It belongs to the SmpB family.

It localises to the cytoplasm. Required for rescue of stalled ribosomes mediated by trans-translation. Binds to transfer-messenger RNA (tmRNA), required for stable association of tmRNA with ribosomes. tmRNA and SmpB together mimic tRNA shape, replacing the anticodon stem-loop with SmpB. tmRNA is encoded by the ssrA gene; the 2 termini fold to resemble tRNA(Ala) and it encodes a 'tag peptide', a short internal open reading frame. During trans-translation Ala-aminoacylated tmRNA acts like a tRNA, entering the A-site of stalled ribosomes, displacing the stalled mRNA. The ribosome then switches to translate the ORF on the tmRNA; the nascent peptide is terminated with the 'tag peptide' encoded by the tmRNA and targeted for degradation. The ribosome is freed to recommence translation, which seems to be the essential function of trans-translation. This is SsrA-binding protein from Ralstonia pickettii (strain 12J).